The following is a 237-amino-acid chain: tRNA (guanine-N(1)-)-methyltransferase (237 aa).

S-adenosyl-L-methionine-binding positions include G113 and M133–L138.

This sequence belongs to the RNA methyltransferase TrmD family. As to quaternary structure, homodimer.

It is found in the cytoplasm. It carries out the reaction guanosine(37) in tRNA + S-adenosyl-L-methionine = N(1)-methylguanosine(37) in tRNA + S-adenosyl-L-homocysteine + H(+). In terms of biological role, specifically methylates guanosine-37 in various tRNAs. This chain is tRNA (guanine-N(1)-)-methyltransferase, found in Wolinella succinogenes (strain ATCC 29543 / DSM 1740 / CCUG 13145 / JCM 31913 / LMG 7466 / NCTC 11488 / FDC 602W) (Vibrio succinogenes).